We begin with the raw amino-acid sequence, 166 residues long: MNPSPRKRVALFTDGACLGNPGPGGWAALLRFNAHEKLLSGGEACTTNNRMELKAAIEGLKALKEPCEVDLYTDSHYLKKAFTEGWLEGWRKRGWRTAEGKPVKNRDLWEALLLAMAPHRVRFHFVKGHTGHPENERVDREARRQAQSQAKTPCPPQAPTLFHEEA.

The 143-residue stretch at 5–147 (PRKRVALFTD…VDREARRQAQ (143 aa)) folds into the RNase H type-1 domain. Mg(2+) is bound by residues Asp14, Glu52, Asp74, and Asp139. The interval 128 to 166 (GHTGHPENERVDREARRQAQSQAKTPCPPQAPTLFHEEA) is disordered. The segment covering 131–144 (GHPENERVDREARR) has biased composition (basic and acidic residues).

This sequence belongs to the RNase H family. In terms of assembly, monomer. Mg(2+) serves as cofactor.

The protein resides in the cytoplasm. It carries out the reaction Endonucleolytic cleavage to 5'-phosphomonoester.. Functionally, endonuclease that specifically degrades the RNA of RNA-DNA hybrids. The protein is Ribonuclease H of Thermus thermophilus (strain ATCC BAA-163 / DSM 7039 / HB27).